The primary structure comprises 166 residues: Transcriptional repressor NrdR (166 aa).

The segment at 3–34 is a zinc-finger region; the sequence is CPFCHFVETDVIDTRKLYEGEVIRRRRRCRAC. One can recognise an ATP-cone domain in the interval 49-139; sequence LMVVKKDGTR…VYRAFTDIGK (91 aa).

The protein belongs to the NrdR family. It depends on Zn(2+) as a cofactor.

Negatively regulates transcription of bacterial ribonucleotide reductase nrd genes and operons by binding to NrdR-boxes. The chain is Transcriptional repressor NrdR from Chloroflexus aurantiacus (strain ATCC 29364 / DSM 637 / Y-400-fl).